The chain runs to 405 residues: Cytoplasmic 60S subunit biogenesis factor ZNF622 (405 aa).

2 U1-type zinc fingers span residues 4-28 and 67-91; these read YTCITCRVAFKDADIQRAHYKTDWH and TYCTVCSKRFSTFNAYENHLKSKKH. Residues 135-230 are disordered; it reads AIRAQPSSSP…GVEEEEEKQA (96 aa). Residues 194-228 show a composition bias toward acidic residues; it reads AEEEEDSEEGWEEMDSDEDLGSEEEMEGVEEEEEK.

Belongs to the REI1 family. As to quaternary structure, homo- and heterodimer. Associates with pre-60S ribosomal particles. Mainly expressed in the ovary. As to expression, mainly expressed in the testis.

The protein resides in the cytoplasm. It is found in the nucleus. Functionally, pre-60S-associated cytoplasmic factor involved in the cytoplasmic maturation of the 60S subunit. The chain is Cytoplasmic 60S subunit biogenesis factor ZNF622 (ZNF622) from Gallus gallus (Chicken).